A 102-amino-acid polypeptide reads, in one-letter code: Small ribosomal subunit protein uS10 (102 aa).

It belongs to the universal ribosomal protein uS10 family. In terms of assembly, part of the 30S ribosomal subunit.

In terms of biological role, involved in the binding of tRNA to the ribosomes. The protein is Small ribosomal subunit protein uS10 of Cereibacter sphaeroides (strain ATCC 17029 / ATH 2.4.9) (Rhodobacter sphaeroides).